Here is a 512-residue protein sequence, read N- to C-terminus: Probable capsid protein 4 (512 aa).

The protein belongs to the NCLDV major capsid protein family.

It localises to the virion. In Acanthamoeba polyphaga mimivirus (APMV), this protein is Probable capsid protein 4.